Reading from the N-terminus, the 45-residue chain is Mu-conotoxin-like Cal 12.1.2d (45 aa).

4 disulfide bridges follow: cysteine 3–cysteine 16, cysteine 11–cysteine 28, cysteine 18–cysteine 33, and cysteine 27–cysteine 39. Tryptophan 17 bears the 6'-bromotryptophan mark. 4-hydroxyproline is present on proline 23. Residues tryptophan 37 and tryptophan 38 each carry the 6'-bromotryptophan modification. Residue proline 40 is modified to 4-hydroxyproline.

Expressed by the venom duct.

It localises to the secreted. In terms of biological role, mu-conotoxins block voltage-gated sodium channels. This toxin reversibly blocks voltage-gated sodium channel in cephalopods, with no alteration in the voltage dependence of sodium conductance or on the kinetics of inactivation. This chain is Mu-conotoxin-like Cal 12.1.2d, found in Californiconus californicus (California cone).